The primary structure comprises 271 residues: Diaminopimelate epimerase (271 aa).

Residues N13, Q46, and N66 each coordinate substrate. The active-site Proton donor is C75. Substrate contacts are provided by residues G76 to N77, N155, N188, and E206 to R207. The Proton acceptor role is filled by C215. G216–S217 is a binding site for substrate.

This sequence belongs to the diaminopimelate epimerase family. Homodimer.

It is found in the cytoplasm. It catalyses the reaction (2S,6S)-2,6-diaminopimelate = meso-2,6-diaminopimelate. Its pathway is amino-acid biosynthesis; L-lysine biosynthesis via DAP pathway; DL-2,6-diaminopimelate from LL-2,6-diaminopimelate: step 1/1. Catalyzes the stereoinversion of LL-2,6-diaminopimelate (L,L-DAP) to meso-diaminopimelate (meso-DAP), a precursor of L-lysine and an essential component of the bacterial peptidoglycan. The polypeptide is Diaminopimelate epimerase (Vesicomyosocius okutanii subsp. Calyptogena okutanii (strain HA)).